We begin with the raw amino-acid sequence, 340 residues long: MLIAQRPSLTEEVVDEFRSRFVIEPLEPGFGYTLGNSLRRTLLSSIPGAAVTSIRIDGVLHEFTTVPGVKEDVTDLILNIKQLVVSSEHDEPVVMYLRKQGPGLVTAADIAPPAGVEVHNPDLVLATLNGKGKLEMELTVERGRGYVSAVQNKQVGQEIGRIPVDSIYSPVLKVTYKVEATRVEQRTDFDKLIVDVETKQAMRPRDAMASAGKTLVELFGLARELNIDAEGIDMGPSPTDAALAADLALPIEELELTVRSYNCLKREGIHSVGELVARSEADLLDIRNFGAKSIDEVKAKLAGMGLALKDSPPGFDPTAAADAFGADDDADAGFVETEQY.

The alpha N-terminal domain (alpha-NTD) stretch occupies residues 1–226; it reads MLIAQRPSLT…ELFGLARELN (226 aa). Residues 243–340 are alpha C-terminal domain (alpha-CTD); the sequence is LAADLALPIE…DAGFVETEQY (98 aa).

This sequence belongs to the RNA polymerase alpha chain family. In terms of assembly, homodimer. The RNAP catalytic core consists of 2 alpha, 1 beta, 1 beta' and 1 omega subunit. When a sigma factor is associated with the core the holoenzyme is formed, which can initiate transcription.

The enzyme catalyses RNA(n) + a ribonucleoside 5'-triphosphate = RNA(n+1) + diphosphate. In terms of biological role, DNA-dependent RNA polymerase catalyzes the transcription of DNA into RNA using the four ribonucleoside triphosphates as substrates. The chain is DNA-directed RNA polymerase subunit alpha from Streptomyces avermitilis (strain ATCC 31267 / DSM 46492 / JCM 5070 / NBRC 14893 / NCIMB 12804 / NRRL 8165 / MA-4680).